Consider the following 563-residue polypeptide: Arginine--tRNA ligase (563 aa).

The short motif at 121 to 131 (PNIAKPFSIGH) is the 'HIGH' region element.

This sequence belongs to the class-I aminoacyl-tRNA synthetase family. Monomer.

It is found in the cytoplasm. It catalyses the reaction tRNA(Arg) + L-arginine + ATP = L-arginyl-tRNA(Arg) + AMP + diphosphate. The polypeptide is Arginine--tRNA ligase (Streptococcus pneumoniae serotype 19F (strain G54)).